Here is a 496-residue protein sequence, read N- to C-terminus: MELTLTTSLGLAVFVFILFKLLTGSKSTKNSLPEAWRLPIIGHMHHLVGTLPHRGVTDMARKYGSLMHLQLGEVSTIVVSSPRWAKEVLTTYDITFANRPETLTGEIVAYHNTDIVLSPYGEYWRQLRKLCTLELLSAKKVKSFQSLREEECWNLVKEVRSSGSGSPVDLSESIFKLIATILSRAAFGKGIKDQREFTEIVKEILRLTGGFDVADIFPSKKILHHLSGKRAKLTNIHNKLDSLINNIVSEHPGSRTSSSQESLLDVLLRLKDSAELPLTSDNVKAVILDMFGAGTDTSSATIEWAISELIRCPRAMEKVQTELRQALNGKERIQEEDIQELSYLKLVIKETLRLHPPLPLVMPRECREPCVLAGYEIPTKTKLIVNVFAINRDPEYWKDAETFMPERFENSPINIMGSEYEYLPFGAGRRMCPGAALGLANVELPLAHILYYFNWKLPNGARLDELDMSECFGATVQRKSELLLVPTAYKTANNSA.

Residues 1-2 (ME) are Cytoplasmic-facing. The chain crosses the membrane as a helical; Signal-anchor for type II membrane protein span at residues 3-23 (LTLTTSLGLAVFVFILFKLLT). The Lumenal segment spans residues 24–496 (GSKSTKNSLP…TAYKTANNSA (473 aa)). Residue Cys432 coordinates heme. Asn493 carries N-linked (GlcNAc...) asparagine glycosylation.

This sequence belongs to the cytochrome P450 family. Requires heme as cofactor.

Its subcellular location is the endoplasmic reticulum membrane. It carries out the reaction (+)-(R)-germacrene A + 3 reduced [NADPH--hemoprotein reductase] + 3 O2 = germacra-1(10),4,11(13)-trien-12-oate + 3 oxidized [NADPH--hemoprotein reductase] + 4 H2O + 4 H(+). It functions in the pathway secondary metabolite biosynthesis; terpenoid biosynthesis. Functionally, involved in the biosynthesis of germacrene-derived sesquiterpene lactones. Catalyzes three consecutive oxidations of germacrene A to produce germacrene A acid. Could also catalyze the three-step oxidation of non-natural substrate amorphadiene to artemisinic acid. This Barnadesia spinosa (Spiny barnadesia) protein is Germacrene A hydroxylase.